Reading from the N-terminus, the 365-residue chain is Phosphoserine aminotransferase (365 aa).

Residue R42 participates in L-glutamate binding. Pyridoxal 5'-phosphate is bound by residues 76-77 (GR), W102, T156, D175, and Q198. K199 is subject to N6-(pyridoxal phosphate)lysine. Residue 240–241 (NT) coordinates pyridoxal 5'-phosphate.

This sequence belongs to the class-V pyridoxal-phosphate-dependent aminotransferase family. SerC subfamily. Homodimer. Requires pyridoxal 5'-phosphate as cofactor.

The protein resides in the cytoplasm. The enzyme catalyses O-phospho-L-serine + 2-oxoglutarate = 3-phosphooxypyruvate + L-glutamate. It carries out the reaction 4-(phosphooxy)-L-threonine + 2-oxoglutarate = (R)-3-hydroxy-2-oxo-4-phosphooxybutanoate + L-glutamate. It functions in the pathway amino-acid biosynthesis; L-serine biosynthesis; L-serine from 3-phospho-D-glycerate: step 2/3. Its pathway is cofactor biosynthesis; pyridoxine 5'-phosphate biosynthesis; pyridoxine 5'-phosphate from D-erythrose 4-phosphate: step 3/5. Functionally, catalyzes the reversible conversion of 3-phosphohydroxypyruvate to phosphoserine and of 3-hydroxy-2-oxo-4-phosphonooxybutanoate to phosphohydroxythreonine. This chain is Phosphoserine aminotransferase, found in Shewanella oneidensis (strain ATCC 700550 / JCM 31522 / CIP 106686 / LMG 19005 / NCIMB 14063 / MR-1).